The following is a 473-amino-acid chain: Probable aspartokinase (473 aa).

ACT domains are found at residues 323–392 (IFGA…FLNN) and 409–473 (VVGA…KTNS).

This sequence belongs to the aspartokinase family.

The catalysed reaction is L-aspartate + ATP = 4-phospho-L-aspartate + ADP. The protein operates within amino-acid biosynthesis; L-lysine biosynthesis via DAP pathway; (S)-tetrahydrodipicolinate from L-aspartate: step 1/4. Its pathway is amino-acid biosynthesis; L-methionine biosynthesis via de novo pathway; L-homoserine from L-aspartate: step 1/3. It functions in the pathway amino-acid biosynthesis; L-threonine biosynthesis; L-threonine from L-aspartate: step 1/5. The chain is Probable aspartokinase from Methanocaldococcus jannaschii (strain ATCC 43067 / DSM 2661 / JAL-1 / JCM 10045 / NBRC 100440) (Methanococcus jannaschii).